A 400-amino-acid polypeptide reads, in one-letter code: CinA-like protein (400 aa).

Belongs to the CinA family.

In Escherichia coli (strain SMS-3-5 / SECEC), this protein is CinA-like protein.